Consider the following 78-residue polypeptide: MMKKLIQLSFTVMIIFTILVLGVVANEGLGKPKKQCNEILKQSNCVAAECDSMCVKKRGKGAGYCSPSKKCYCYYHCP.

The signal sequence occupies residues 1-25; the sequence is MMKKLIQLSFTVMIIFTILVLGVVA. 4 disulfides stabilise this stretch: cysteine 36–cysteine 77, cysteine 45–cysteine 65, cysteine 50–cysteine 71, and cysteine 54–cysteine 73.

It belongs to the DEFL family.

Its subcellular location is the secreted. This is Defensin-like protein 149 (LCR5) from Arabidopsis thaliana (Mouse-ear cress).